The following is a 180-amino-acid chain: MGDPKRQRKRYETPSHPWIKERLDRERVLVQKYALKNKKELWKHETQLKNFRRRARRLLAARGKQAEIERAQLLQRLARLGILPEGAHLDDVLSLTIDDILERRLQTLVFKKGLARTIKQARQLIVHGHIEVNGQIIRSPSYLVLKEEEDGITYGRASPFANSQHPERMVIEEVQKGEAQ.

The 72-residue stretch at 103-174 (RRLQTLVFKK…HPERMVIEEV (72 aa)) folds into the S4 RNA-binding domain.

Belongs to the universal ribosomal protein uS4 family. Part of the 30S ribosomal subunit. Contacts protein S5. The interaction surface between S4 and S5 is involved in control of translational fidelity.

In terms of biological role, one of the primary rRNA binding proteins, it binds directly to 16S rRNA where it nucleates assembly of the body of the 30S subunit. Its function is as follows. With S5 and S12 plays an important role in translational accuracy. In Thermococcus sibiricus (strain DSM 12597 / MM 739), this protein is Small ribosomal subunit protein uS4.